Here is a 378-residue protein sequence, read N- to C-terminus: Mitogen-activated protein kinase mpkC (378 aa).

The Protein kinase domain occupies 20-300; the sequence is YVNPQPIGMG…AQDALRYPYL (281 aa). Residues 26–34 and lysine 49 each bind ATP; that span reads IGMGSFGLV. Aspartate 141 serves as the catalytic Proton acceptor. The residue at position 171 (threonine 171) is a Phosphothreonine. The TXY motif lies at 171–173; that stretch reads TGY. The residue at position 173 (tyrosine 173) is a Phosphotyrosine.

Belongs to the protein kinase superfamily. Ser/Thr protein kinase family. MAP kinase subfamily. HOG1 sub-subfamily. Interacts with sakA upon osmotic and cell wall stresses. Mg(2+) serves as cofactor. Post-translationally, dually phosphorylated on Thr-171 and Tyr-173, which activates the enzyme.

The protein localises to the cytoplasm. It localises to the nucleus. It catalyses the reaction L-seryl-[protein] + ATP = O-phospho-L-seryl-[protein] + ADP + H(+). It carries out the reaction L-threonyl-[protein] + ATP = O-phospho-L-threonyl-[protein] + ADP + H(+). Activated by tyrosine and threonine phosphorylation. Functionally, mitogen-activated protein kinase; part of an osmotic and general signal pathways involved in regulation of the response to the cell wall damage, oxidative stress, drug resistance, and establishment of infection. Required for growth on media where sorbitol or mannitol is the sole carbon source. With sakA, plays a redundant or cooperative role in the conidial stress resistance. Also plays a supportive role in osmotic stress adaptation when sakA is deficient. Involved in paradoxical growth, the cell wall integrity (CWI) pathway and biofilm formation. Acts by modulating sakA activity upon exposure to several types o stresses and during cell wall biosynthesis. Also collaborates with sakA to allow ful virulence in a neutropenic murine model of invasive pulmonary aspergillosis. MpkC and sakA have both independent and collaborative functions during the transcriptional response to transient osmotic stress, and mpkC plays a major role in the modulation of the response to DNA metabolism while activating mitochondrial functions and cation transport. The polypeptide is Mitogen-activated protein kinase mpkC (mpkC) (Aspergillus fumigatus (strain ATCC MYA-4609 / CBS 101355 / FGSC A1100 / Af293) (Neosartorya fumigata)).